Reading from the N-terminus, the 347-residue chain is NADH-ubiquinone oxidoreductase chain 2 (347 aa).

11 helical membrane-spanning segments follow: residues 3-23 (PLIMSIILATIILGTTIVMTG), 25-45 (HWLMIWIGFEMNMLAIIPMLM), 59-79 (YFFTQATASMLLMLAGIINLM), 96-116 (IIMTLALAMKLGLAPFHFWVP), 127-147 (GLILLTWQKLASMTGLYMISP), 148-168 (GINLNMLMTMSMLSIAIGGWG), 178-198 (IMAYSSIAHMGWMTAILIYNP), 201-221 (TLLNLVIYILMTTTMFMLFMI), 247-267 (TLLSMGGLPPLMGFLPKWMII), 276-296 (IVLPTIMAITALLNLFFYMRL), and 325-345 (LLTPMIMMSTLTLPLAPMMMI).

It belongs to the complex I subunit 2 family. Core subunit of respiratory chain NADH dehydrogenase (Complex I) which is composed of 45 different subunits. Interacts with TMEM242.

It is found in the mitochondrion inner membrane. It carries out the reaction a ubiquinone + NADH + 5 H(+)(in) = a ubiquinol + NAD(+) + 4 H(+)(out). In terms of biological role, core subunit of the mitochondrial membrane respiratory chain NADH dehydrogenase (Complex I) which catalyzes electron transfer from NADH through the respiratory chain, using ubiquinone as an electron acceptor. Essential for the catalytic activity and assembly of complex I. The polypeptide is NADH-ubiquinone oxidoreductase chain 2 (Ozimops beccarii (Beccari's free-tailed bat)).